Reading from the N-terminus, the 183-residue chain is MNISPSPLTDTGKALLRLNLIAIALLWLYPLLTYSQLPETVPTHFGAGGEPDRFGSREELLILPAVFSIAPAIILIITKLRFTLINRYPQFINLPAFYMNIGKIREERRSYWVNRYFEPVLLLSLILSAGFLGMEYAIFHATLSGELPLLFYIILIFVIAAPLFIFFLYLSMISAQMSREIGE.

A run of 4 helical transmembrane segments spans residues 13–35 (KALLRLNLIAIALLWLYPLLTYS), 60–82 (LLILPAVFSIAPAIILIITKLRF), 117–139 (FEPVLLLSLILSAGFLGMEYAIF), and 149–171 (LLFYIILIFVIAAPLFIFFLYLS).

The protein resides in the cell membrane. This is an uncharacterized protein from Archaeoglobus fulgidus (strain ATCC 49558 / DSM 4304 / JCM 9628 / NBRC 100126 / VC-16).